Here is a 963-residue protein sequence, read N- to C-terminus: Importin-13 (963 aa).

20 HEAT repeats span residues 24-54, 56-88, 95-135, 142-179, 194-231, 236-268, 276-325, 330-372, 375-438, 440-476, 487-522, 524-558, 562-600, 603-648, 676-716, 720-754, 761-803, 815-845, 860-893, and 897-931; these read ENVE…QAQV, PQAW…KISR, TDQY…LSMM, AVAD…EFQT, LAVE…SWVQ, LQDC…NAIS, VNTL…ALLD, WQSF…DDIL, EAEK…YEML, AELL…FQSI, VVPG…WLAD, PVMI…CREC, LPPY…LLSA, VEEN…SNLF, PVVV…VKTL, FAPM…VHIF, FPPI…ALKR, VKAV…TELL, EDGR…FALN, and FSLL…QQIL. Positions 45-111 constitute an Importin N-terminal domain; it reads AQKWLMQAQV…KAHSFTQITR (67 aa).

This sequence belongs to the importin beta family. As to quaternary structure, interacts with UBC9, RAN, RBM8A, eIF-1A and PAX6. As to expression, expressed in fetal brain, heart, intestine and kidney.

It localises to the cytoplasm. Its subcellular location is the nucleus. Functions in nuclear protein import as nuclear transport receptor. Serves as receptor for nuclear localization signals (NLS) in cargo substrates. Is thought to mediate docking of the importin/substrate complex to the nuclear pore complex (NPC) through binding to nucleoporin and the complex is subsequently translocated through the pore by an energy requiring, Ran-dependent mechanism. At the nucleoplasmic side of the NPC, Ran binds to the importin, the importin/substrate complex dissociates and importin is re-exported from the nucleus to the cytoplasm where GTP hydrolysis releases Ran. The directionality of nuclear import is thought to be conferred by an asymmetric distribution of the GTP- and GDP-bound forms of Ran between the cytoplasm and nucleus. Mediates the nuclear import of UBC9, the RBM8A/MAGOH complex, PAX6 and probably other members of the paired homeobox family. Also mediates nuclear export of eIF-1A, and the cytoplasmic release of eIF-1A is triggered by the loading of import substrates onto IPO13. The chain is Importin-13 (Ipo13) from Rattus norvegicus (Rat).